The chain runs to 118 residues: Large ribosomal subunit protein uL24 (118 aa).

It belongs to the universal ribosomal protein uL24 family. Part of the 50S ribosomal subunit.

In terms of biological role, one of two assembly initiator proteins, it binds directly to the 5'-end of the 23S rRNA, where it nucleates assembly of the 50S subunit. Its function is as follows. One of the proteins that surrounds the polypeptide exit tunnel on the outside of the subunit. The protein is Large ribosomal subunit protein uL24 of Synechococcus sp. (strain WH7803).